The primary structure comprises 225 residues: Uracil-DNA glycosylase (225 aa).

D67 (proton acceptor) is an active-site residue.

Belongs to the uracil-DNA glycosylase (UDG) superfamily. UNG family.

Its subcellular location is the cytoplasm. It catalyses the reaction Hydrolyzes single-stranded DNA or mismatched double-stranded DNA and polynucleotides, releasing free uracil.. Its function is as follows. Excises uracil residues from the DNA which can arise as a result of misincorporation of dUMP residues by DNA polymerase or due to deamination of cytosine. This is Uracil-DNA glycosylase from Coxiella burnetii (strain Dugway 5J108-111).